Reading from the N-terminus, the 298-residue chain is N-acetylmuramic acid 6-phosphate etherase (298 aa).

Positions 55-218 (IHAQVSGGGR…STGLMIKSGK (164 aa)) constitute an SIS domain. The Proton donor role is filled by glutamate 83. Glutamate 114 is an active-site residue.

The protein belongs to the GCKR-like family. MurNAc-6-P etherase subfamily. In terms of assembly, homodimer.

It carries out the reaction N-acetyl-D-muramate 6-phosphate + H2O = N-acetyl-D-glucosamine 6-phosphate + (R)-lactate. It functions in the pathway amino-sugar metabolism; 1,6-anhydro-N-acetylmuramate degradation. The protein operates within amino-sugar metabolism; N-acetylmuramate degradation. It participates in cell wall biogenesis; peptidoglycan recycling. Functionally, specifically catalyzes the cleavage of the D-lactyl ether substituent of MurNAc 6-phosphate, producing GlcNAc 6-phosphate and D-lactate. Together with AnmK, is also required for the utilization of anhydro-N-acetylmuramic acid (anhMurNAc) either imported from the medium or derived from its own cell wall murein, and thus plays a role in cell wall recycling. In Escherichia coli O17:K52:H18 (strain UMN026 / ExPEC), this protein is N-acetylmuramic acid 6-phosphate etherase.